The primary structure comprises 164 residues: Magnesium-dependent phosphatase 1 (164 aa).

Asp-11 acts as the Nucleophile in catalysis. Residue Asp-11 coordinates Mg(2+). 2 residues coordinate phosphate: Leu-12 and Asp-13. Asp-13 contributes to the Mg(2+) binding site. Asp-13 (proton donor) is an active-site residue. Trp-20 is a binding site for substrate. Phosphate contacts are provided by Ser-69, Arg-70, and Lys-100. Arg-70 provides a ligand contact to substrate. Asp-123 serves as a coordination point for Mg(2+).

The protein belongs to the HAD-like hydrolase superfamily. Requires Mg(2+) as cofactor.

The enzyme catalyses O-phospho-L-tyrosyl-[protein] + H2O = L-tyrosyl-[protein] + phosphate. Its activity is regulated as follows. Inhibited by vanadate and zinc, and slightly by calcium. Its function is as follows. Magnesium-dependent phosphatase which may act as a tyrosine phosphatase. This Mus musculus (Mouse) protein is Magnesium-dependent phosphatase 1 (Mdp1).